Reading from the N-terminus, the 47-residue chain is uncharacterized protein (47 aa).

Residues 24 to 47 (FGPNPIEPPTDIAPDPDSTKTWLI) are disordered.

This is an uncharacterized protein from Mycobacterium tuberculosis (strain ATCC 25618 / H37Rv).